We begin with the raw amino-acid sequence, 178 residues long: Large ribosomal subunit protein uL6 (178 aa).

The protein belongs to the universal ribosomal protein uL6 family. As to quaternary structure, part of the 50S ribosomal subunit.

Its function is as follows. This protein binds to the 23S rRNA, and is important in its secondary structure. It is located near the subunit interface in the base of the L7/L12 stalk, and near the tRNA binding site of the peptidyltransferase center. The protein is Large ribosomal subunit protein uL6 of Corynebacterium kroppenstedtii (strain DSM 44385 / JCM 11950 / CIP 105744 / CCUG 35717).